The following is a 1080-amino-acid chain: AP-4 complex subunit epsilon (1080 aa).

HEAT repeat units follow at residues 161–198 (DTIP…LVGD), 201–238 (LDDD…KHST), 369–405 (QLIE…KVSP), 406–443 (KLVL…QTNV), and 445–479 (PVCS…KYSP). Disordered regions lie at residues 711–782 (TPLV…FPQQ), 801–920 (NNNS…NIDP), 933–973 (FSEN…INNN), and 996–1027 (TNNS…NNNL). 5 stretches are compositionally biased toward low complexity: residues 762–782 (QQQQ…FPQQ), 801–847 (NNNS…PNNQ), 878–911 (NKQT…IQKH), 936–952 (NNNR…NQNN), and 962–972 (KKSNNENNINN).

Belongs to the adaptor complexes large subunit family. In terms of assembly, may be part of the adaptor protein complex 4 (AP-4), a heterotetramer composed of two large adaptins (epsilon-type subunitand beta-type subunit), a medium adaptin (mu-type subunit) and a small adaptin (sigma-type).

It is found in the golgi apparatus. The protein localises to the trans-Golgi network membrane. Functionally, probable component of an adaptor protein complex. Adaptor protein complexes are vesicle coat components involved both in vesicle formation and cargo selection. They control the vesicular transport of proteins in different trafficking pathways. The chain is AP-4 complex subunit epsilon from Dictyostelium discoideum (Social amoeba).